The primary structure comprises 556 residues: Urocanate hydratase (556 aa).

NAD(+)-binding positions include 52–53 (GG), Gln-130, 176–178 (GMG), Glu-196, Arg-201, 242–243 (NA), 263–267 (QTSAH), 273–274 (YL), and Tyr-322. The active site involves Cys-410. NAD(+) is bound at residue Gly-492.

It belongs to the urocanase family. It depends on NAD(+) as a cofactor.

The protein resides in the cytoplasm. It carries out the reaction 4-imidazolone-5-propanoate = trans-urocanate + H2O. Its pathway is amino-acid degradation; L-histidine degradation into L-glutamate; N-formimidoyl-L-glutamate from L-histidine: step 2/3. Catalyzes the conversion of urocanate to 4-imidazolone-5-propionate. This is Urocanate hydratase from Shewanella frigidimarina (strain NCIMB 400).